The chain runs to 176 residues: Large ribosomal subunit protein uL6 (176 aa).

The protein belongs to the universal ribosomal protein uL6 family. Part of the 50S ribosomal subunit.

In terms of biological role, this protein binds to the 23S rRNA, and is important in its secondary structure. It is located near the subunit interface in the base of the L7/L12 stalk, and near the tRNA binding site of the peptidyltransferase center. This is Large ribosomal subunit protein uL6 from Lactobacillus delbrueckii subsp. bulgaricus (strain ATCC 11842 / DSM 20081 / BCRC 10696 / JCM 1002 / NBRC 13953 / NCIMB 11778 / NCTC 12712 / WDCM 00102 / Lb 14).